A 308-amino-acid polypeptide reads, in one-letter code: Acetylglutamate kinase (308 aa).

Residues 73–74, Arg95, and Asn194 contribute to the substrate site; that span reads GG.

This sequence belongs to the acetylglutamate kinase family. ArgB subfamily.

The protein resides in the cytoplasm. It carries out the reaction N-acetyl-L-glutamate + ATP = N-acetyl-L-glutamyl 5-phosphate + ADP. It participates in amino-acid biosynthesis; L-arginine biosynthesis; N(2)-acetyl-L-ornithine from L-glutamate: step 2/4. Catalyzes the ATP-dependent phosphorylation of N-acetyl-L-glutamate. The protein is Acetylglutamate kinase of Rhodococcus jostii (strain RHA1).